The primary structure comprises 557 residues: Urease subunit alpha (557 aa).

Positions 130–557 (GFIDTHIHWV…LPLTQLYFIY (428 aa)) constitute a Urease domain. Residues His-135, His-137, and Lys-217 each contribute to the Ni(2+) site. Lys-217 bears the N6-carboxylysine mark. His-219 provides a ligand contact to substrate. Positions 246 and 272 each coordinate Ni(2+). Residue His-320 is the Proton donor of the active site. Ni(2+) is bound at residue Asp-360.

It belongs to the metallo-dependent hydrolases superfamily. Urease alpha subunit family. As to quaternary structure, heterohexamer of 3 UreC (alpha) and 3 UreAB (gamma/beta) subunits. Ni cation serves as cofactor. In terms of processing, carboxylation allows a single lysine to coordinate two nickel ions.

The protein resides in the cytoplasm. It carries out the reaction urea + 2 H2O + H(+) = hydrogencarbonate + 2 NH4(+). It participates in nitrogen metabolism; urea degradation; CO(2) and NH(3) from urea (urease route): step 1/1. The sequence is that of Urease subunit alpha from Sulfurisphaera tokodaii (strain DSM 16993 / JCM 10545 / NBRC 100140 / 7) (Sulfolobus tokodaii).